We begin with the raw amino-acid sequence, 418 residues long: Probable serine hydroxymethyltransferase (418 aa).

(6S)-5,6,7,8-tetrahydrofolate contacts are provided by residues Leu118 and 122–124 (GHL). An N6-(pyridoxal phosphate)lysine modification is found at Lys226. 351–353 (SPF) lines the (6S)-5,6,7,8-tetrahydrofolate pocket.

The protein belongs to the SHMT family. As to quaternary structure, homodimer. Pyridoxal 5'-phosphate is required as a cofactor.

It is found in the cytoplasm. The enzyme catalyses (6R)-5,10-methylene-5,6,7,8-tetrahydrofolate + glycine + H2O = (6S)-5,6,7,8-tetrahydrofolate + L-serine. The protein operates within one-carbon metabolism; tetrahydrofolate interconversion. Functionally, catalyzes the reversible interconversion of serine and glycine with tetrahydrofolate (THF) serving as the one-carbon carrier. This reaction serves as the major source of one-carbon groups required for the biosynthesis of purines, thymidylate, methionine, and other important biomolecules. This chain is Probable serine hydroxymethyltransferase, found in Mesomycoplasma hyopneumoniae (strain 232) (Mycoplasma hyopneumoniae).